The primary structure comprises 964 residues: Protein translocase subunit SecA (964 aa).

Residues Q86, 104 to 108 (GEGKT), and D494 contribute to the ATP site. The interval 848–964 (AESADTIAVA…YKMCHGQNEK (117 aa)) is disordered. A compositionally biased stretch (acidic residues) spans 871–882 (AEGEVEEEDEDT). The span at 889–900 (AESAAASGAGES) shows a compositional bias: low complexity. Zn(2+) is bound by residues C947, C949, C958, and H959.

The protein belongs to the SecA family. Monomer and homodimer. Part of the essential Sec protein translocation apparatus which comprises SecA, SecYEG and auxiliary proteins SecDF. Other proteins may also be involved. Requires Zn(2+) as cofactor.

The protein localises to the cell membrane. The protein resides in the cytoplasm. The catalysed reaction is ATP + H2O + cellular proteinSide 1 = ADP + phosphate + cellular proteinSide 2.. In terms of biological role, part of the Sec protein translocase complex. Interacts with the SecYEG preprotein conducting channel. Has a central role in coupling the hydrolysis of ATP to the transfer of proteins into and across the cell membrane, serving as an ATP-driven molecular motor driving the stepwise translocation of polypeptide chains across the membrane. The polypeptide is Protein translocase subunit SecA (Bifidobacterium longum (strain NCC 2705)).